Here is a 476-residue protein sequence, read N- to C-terminus: Adenosylhomocysteinase (476 aa).

Substrate-binding residues include Thr67, Asp142, and Glu202. 203 to 205 contributes to the NAD(+) binding site; the sequence is TTT. Lys232 and Asp236 together coordinate substrate. Residues Asn237, 266 to 271, Glu289, Asn324, 345 to 347, and Asn390 each bind NAD(+); these read GYGDVG and IGH.

This sequence belongs to the adenosylhomocysteinase family. It depends on NAD(+) as a cofactor.

Its subcellular location is the cytoplasm. The catalysed reaction is S-adenosyl-L-homocysteine + H2O = L-homocysteine + adenosine. The protein operates within amino-acid biosynthesis; L-homocysteine biosynthesis; L-homocysteine from S-adenosyl-L-homocysteine: step 1/1. In terms of biological role, may play a key role in the regulation of the intracellular concentration of adenosylhomocysteine. In Synechococcus sp. (strain CC9605), this protein is Adenosylhomocysteinase.